A 139-amino-acid polypeptide reads, in one-letter code: Large ribosomal subunit protein uL16 (139 aa).

This sequence belongs to the universal ribosomal protein uL16 family. Part of the 50S ribosomal subunit.

Its function is as follows. Binds 23S rRNA and is also seen to make contacts with the A and possibly P site tRNAs. The chain is Large ribosomal subunit protein uL16 from Chlorobium phaeobacteroides (strain BS1).